Reading from the N-terminus, the 323-residue chain is Acetyl-coenzyme A carboxylase carboxyl transferase subunit alpha (323 aa).

The 254-residue stretch at 40 to 293 (LAEKSLQLTK…RKALAESLKT (254 aa)) folds into the CoA carboxyltransferase C-terminal domain.

The protein belongs to the AccA family. As to quaternary structure, acetyl-CoA carboxylase is a heterohexamer composed of biotin carboxyl carrier protein (AccB), biotin carboxylase (AccC) and two subunits each of ACCase subunit alpha (AccA) and ACCase subunit beta (AccD).

Its subcellular location is the cytoplasm. The catalysed reaction is N(6)-carboxybiotinyl-L-lysyl-[protein] + acetyl-CoA = N(6)-biotinyl-L-lysyl-[protein] + malonyl-CoA. The protein operates within lipid metabolism; malonyl-CoA biosynthesis; malonyl-CoA from acetyl-CoA: step 1/1. Its function is as follows. Component of the acetyl coenzyme A carboxylase (ACC) complex. First, biotin carboxylase catalyzes the carboxylation of biotin on its carrier protein (BCCP) and then the CO(2) group is transferred by the carboxyltransferase to acetyl-CoA to form malonyl-CoA. The sequence is that of Acetyl-coenzyme A carboxylase carboxyl transferase subunit alpha from Polynucleobacter necessarius subsp. necessarius (strain STIR1).